Consider the following 217-residue polypeptide: Phosphoenolpyruvate guanylyltransferase (217 aa).

Phosphoenolpyruvate-binding residues include Thr-150, Gly-165, and Ser-168.

This sequence belongs to the CofC family.

It catalyses the reaction phosphoenolpyruvate + GTP + H(+) = enolpyruvoyl-2-diphospho-5'-guanosine + diphosphate. Its pathway is cofactor biosynthesis; coenzyme F420 biosynthesis. Guanylyltransferase that catalyzes the activation of phosphoenolpyruvate (PEP) as enolpyruvoyl-2-diphospho-5'-guanosine, via the condensation of PEP with GTP. It is involved in the biosynthesis of coenzyme F420, a hydride carrier cofactor. This chain is Phosphoenolpyruvate guanylyltransferase, found in Mycobacterium ulcerans (strain Agy99).